Reading from the N-terminus, the 293-residue chain is Pantothenate synthetase (293 aa).

Residue 30–37 (MGYLHKGH) coordinates ATP. His-37 functions as the Proton donor in the catalytic mechanism. Position 61 (Gln-61) interacts with (R)-pantoate. Gln-61 is a binding site for beta-alanine. ATP is bound at residue 147–150 (GEKD). Gln-153 contributes to the (R)-pantoate binding site. Residues Val-176 and 184 to 187 (CSSR) each bind ATP.

Belongs to the pantothenate synthetase family. In terms of assembly, homodimer.

The protein localises to the cytoplasm. The catalysed reaction is (R)-pantoate + beta-alanine + ATP = (R)-pantothenate + AMP + diphosphate + H(+). It functions in the pathway cofactor biosynthesis; (R)-pantothenate biosynthesis; (R)-pantothenate from (R)-pantoate and beta-alanine: step 1/1. In terms of biological role, catalyzes the condensation of pantoate with beta-alanine in an ATP-dependent reaction via a pantoyl-adenylate intermediate. This chain is Pantothenate synthetase, found in Brucella canis (strain ATCC 23365 / NCTC 10854 / RM-666).